Reading from the N-terminus, the 99-residue chain is Protein translation factor SUI1 homolog (99 aa).

It belongs to the SUI1 family.

This is Protein translation factor SUI1 homolog from Sulfolobus acidocaldarius (strain ATCC 33909 / DSM 639 / JCM 8929 / NBRC 15157 / NCIMB 11770).